The chain runs to 300 residues: Ribosomal protein bS6--L-glutamate ligase (300 aa).

The region spanning 104 to 287 (MQLLARQGID…IAGKMIRWIE (184 aa)) is the ATP-grasp domain. ATP is bound by residues lysine 141, 178–179 (EY), aspartate 187, and 211–213 (RSN). The Mg(2+) site is built by aspartate 248, glutamate 260, and asparagine 262. Mn(2+) is bound by residues aspartate 248, glutamate 260, and asparagine 262.

Belongs to the RimK family. Mg(2+) serves as cofactor. It depends on Mn(2+) as a cofactor.

Functionally, an L-glutamate ligase that catalyzes the ATP-dependent post-translational addition of glutamate residues to the C-terminus of ribosomal protein bS6 (RpsF). Is also able to catalyze the synthesis of poly-alpha-glutamate in vitro, via ATP hydrolysis from unprotected glutamate as substrate. The number of glutamate residues added to either RpsF or to poly-alpha-glutamate changes with pH. This is Ribosomal protein bS6--L-glutamate ligase from Escherichia coli O139:H28 (strain E24377A / ETEC).